Reading from the N-terminus, the 457-residue chain is PDZ and LIM domain protein 7 (457 aa).

The 85-residue stretch at methionine 1–glutamine 85 folds into the PDZ domain. Phosphoserine is present on serine 78. 3 disordered regions span residues serine 82–aspartate 142, threonine 176–valine 226, and threonine 239–arginine 258. Position 103 is an asymmetric dimethylarginine (arginine 103). A Phosphoserine modification is found at serine 111. Over residues glutamate 208–arginine 221 the composition is skewed to pro residues. Serine 247 bears the Phosphoserine mark. LIM zinc-binding domains are found at residues proline 280–alanine 338, proline 339–threonine 398, and lysine 399–valine 457.

As to quaternary structure, binds via its LIM zinc-binding 3 domain (LIM 3) to endocytic codes of INSR, but not with those of IGF1R, LDLR, TFRC, or EGFR. Interacts with various PKC isoforms through the LIM zinc-binding domains. Binds to RET in a phosphorylation-independent manner via its LIM zinc-binding domain 2 (LIM 2). Probably part of a complex with SHC and the RET dimer. Interacts with TPM2. Interacts with TBX4 and TBX5. Isoform 1 and isoform 2 are expressed ubiquitously, however, isoform 2 predominates in skeletal muscle, isoform 1 is more abundant in lung, spleen, leukocytes and fetal liver.

It is found in the cytoplasm. Its subcellular location is the cytoskeleton. Its function is as follows. May function as a scaffold on which the coordinated assembly of proteins can occur. May play a role as an adapter that, via its PDZ domain, localizes LIM-binding proteins to actin filaments of both skeletal muscle and nonmuscle tissues. Involved in both of the two fundamental mechanisms of bone formation, direct bone formation (e.g. embryonic flat bones mandible and cranium), and endochondral bone formation (e.g. embryonic long bone development). Plays a role during fracture repair. Involved in BMP6 signaling pathway. This chain is PDZ and LIM domain protein 7 (PDLIM7), found in Homo sapiens (Human).